A 307-amino-acid polypeptide reads, in one-letter code: Non-homologous end joining protein Ku (307 aa).

The region spanning 11-179 (LSFGLVSIPV…EVRSMKDLNI (169 aa)) is the Ku domain. Low complexity-rich tracts occupy residues 257-267 (RGGAKAKPAAA) and 290-307 (ARAPKSPAEAPAKVRARK). The segment at 257 to 307 (RGGAKAKPAAAPRRKAPEPVAGMAEATRARKPAARAPKSPAEAPAKVRARK) is disordered.

The protein belongs to the prokaryotic Ku family. As to quaternary structure, homodimer. Interacts with LigD.

With LigD forms a non-homologous end joining (NHEJ) DNA repair enzyme, which repairs dsDNA breaks with reduced fidelity. Binds linear dsDNA with 5'- and 3'- overhangs but not closed circular dsDNA nor ssDNA. Recruits and stimulates the ligase activity of LigD. The chain is Non-homologous end joining protein Ku from Paraburkholderia phymatum (strain DSM 17167 / CIP 108236 / LMG 21445 / STM815) (Burkholderia phymatum).